The following is a 296-amino-acid chain: Prostate androgen-regulated mucin-like protein 1 homolog (296 aa).

A signal peptide spans 1–20 (MVCKVLIALCIFTAGLRVQG). Over 21-244 (SPTVPLPVSL…EVENALSSGS (224 aa)) the chain is Extracellular. 2 N-linked (GlcNAc...) asparagine glycosylation sites follow: Asn-61 and Asn-95. Residues 72–220 (LTSQLPTDHR…SPQDTEPGKV (149 aa)) are disordered. The span at 78 to 95 (TDHREEAVTSPPLKRDVN) shows a compositional bias: basic and acidic residues. Polar residues predominate over residues 96-110 (STDSSPAGFPSTSSD). A compositionally biased stretch (low complexity) spans 139–167 (LLSSQAPTSATTSPATSLSESLSASVTSS). Residues 168-177 (HNSTVANIQP) are compositionally biased toward polar residues. Residue Asn-169 is glycosylated (N-linked (GlcNAc...) asparagine). Residues 206–217 (VPKEKSPQDTEP) show a composition bias toward basic and acidic residues. Residues 245–265 (IAAITVTVIAVVLLVFGGAAY) form a helical membrane-spanning segment. The Cytoplasmic segment spans residues 266 to 296 (LKIRHSSYGRLLDDHDYGSWGNYNNPLYDDS). Ser-284 is subject to Phosphoserine.

The protein belongs to the PARM family. Highly N-glycosylated and O-glycosylated.

The protein localises to the cell membrane. The protein resides in the golgi apparatus membrane. It is found in the endosome membrane. Functionally, may regulate TLP1 expression and telomerase activity, thus enabling certain prostatic cells to resist apoptosis. The sequence is that of Prostate androgen-regulated mucin-like protein 1 homolog (Parm1) from Mus musculus (Mouse).